A 121-amino-acid polypeptide reads, in one-letter code: Large ribosomal subunit protein bL19 (121 aa).

This sequence belongs to the bacterial ribosomal protein bL19 family.

Its function is as follows. This protein is located at the 30S-50S ribosomal subunit interface and may play a role in the structure and function of the aminoacyl-tRNA binding site. In Chlamydia pneumoniae (Chlamydophila pneumoniae), this protein is Large ribosomal subunit protein bL19 (rplS).